The primary structure comprises 342 residues: C-X-C chemokine receptor type 6 (342 aa).

Topologically, residues 1-32 (MAEHDYHEDYGFSSFNDSSQEEHQDFLQFSKV) are extracellular. Asn-16 carries an N-linked (GlcNAc...) asparagine glycan. Residues 33 to 59 (FLPCMYLVVFVCGLVGNSLVLVISIFY) form a helical membrane-spanning segment. Residues 60 to 68 (HKLQSLTDV) lie on the Cytoplasmic side of the membrane. The chain crosses the membrane as a helical span at residues 69–89 (FLVNLPLADLVFVCTLPFWAY). Residues 90 to 103 (AGIHEWVFGQVMCK) lie on the Extracellular side of the membrane. A disulfide bond links Cys-102 and Cys-180. Residues 104–125 (SLLGIYTINFYTSMLILTCITV) form a helical membrane-spanning segment. The Cytoplasmic segment spans residues 126-143 (DRFIVVVKATKAYNQQAK). Residues 144–164 (RMTWGKVTSLLIWVISLLVSL) form a helical membrane-spanning segment. Topologically, residues 165–187 (PQIIYGNVFNLDKLICGYHDEAI) are extracellular. A helical membrane pass occupies residues 188-215 (STVVLATQMTLGFFLPLLTMIVCYSVII). Over 216-231 (KTLLHAGGFQKHRSLK) the chain is Cytoplasmic. A helical membrane pass occupies residues 232–259 (IIFLVMAVFLLTQMPFNLMKFIRSTHWE). At 260–275 (YYAMTSFHYTIMVTEA) the chain is on the extracellular side. A helical transmembrane segment spans residues 276–293 (IAYLRACLNPVLYAFVSL). Residues 294 to 342 (KFRKNFWKLVKDIGCLPYLGVSHQWKSSEDNSKTFSASHNVEATSMFQL) are Cytoplasmic-facing.

This sequence belongs to the G-protein coupled receptor 1 family. In terms of tissue distribution, expressed in lymphoid tissues and activated T cells.

The protein resides in the cell membrane. Functionally, receptor for the C-X-C chemokine CXCL16. Used as a coreceptor by SIVs and by strains of HIV-2 and m-tropic HIV-1. The sequence is that of C-X-C chemokine receptor type 6 (CXCR6) from Homo sapiens (Human).